Consider the following 729-residue polypeptide: Fatty acid oxidation complex subunit alpha (729 aa).

The tract at residues Met-1 to Lys-189 is enoyl-CoA hydratase/isomerase. A substrate-binding site is contributed by Asp-296. The interval Glu-311–Ala-729 is 3-hydroxyacyl-CoA dehydrogenase. NAD(+) is bound by residues Met-324, Asp-343, Val-400–Glu-402, Lys-407, and Ser-429. Catalysis depends on His-450, which acts as the For 3-hydroxyacyl-CoA dehydrogenase activity. NAD(+) is bound at residue Asn-453. Substrate contacts are provided by Asn-500 and Tyr-660. The disordered stretch occupies residues Arg-708–Ala-729.

The protein in the N-terminal section; belongs to the enoyl-CoA hydratase/isomerase family. It in the C-terminal section; belongs to the 3-hydroxyacyl-CoA dehydrogenase family. Heterotetramer of two alpha chains (FadB) and two beta chains (FadA).

It catalyses the reaction a (3S)-3-hydroxyacyl-CoA + NAD(+) = a 3-oxoacyl-CoA + NADH + H(+). It carries out the reaction a (3S)-3-hydroxyacyl-CoA = a (2E)-enoyl-CoA + H2O. The catalysed reaction is a 4-saturated-(3S)-3-hydroxyacyl-CoA = a (3E)-enoyl-CoA + H2O. The enzyme catalyses (3S)-3-hydroxybutanoyl-CoA = (3R)-3-hydroxybutanoyl-CoA. It catalyses the reaction a (3Z)-enoyl-CoA = a 4-saturated (2E)-enoyl-CoA. It carries out the reaction a (3E)-enoyl-CoA = a 4-saturated (2E)-enoyl-CoA. It functions in the pathway lipid metabolism; fatty acid beta-oxidation. Its function is as follows. Involved in the aerobic and anaerobic degradation of long-chain fatty acids via beta-oxidation cycle. Catalyzes the formation of 3-oxoacyl-CoA from enoyl-CoA via L-3-hydroxyacyl-CoA. It can also use D-3-hydroxyacyl-CoA and cis-3-enoyl-CoA as substrate. In Salmonella gallinarum (strain 287/91 / NCTC 13346), this protein is Fatty acid oxidation complex subunit alpha.